Here is a 436-residue protein sequence, read N- to C-terminus: Methylenetetrahydrofolate--tRNA-(uracil-5-)-methyltransferase TrmFO (436 aa).

An FAD-binding site is contributed by 7–12; it reads GAGLAG.

This sequence belongs to the MnmG family. TrmFO subfamily. FAD is required as a cofactor.

It is found in the cytoplasm. It catalyses the reaction uridine(54) in tRNA + (6R)-5,10-methylene-5,6,7,8-tetrahydrofolate + NADH + H(+) = 5-methyluridine(54) in tRNA + (6S)-5,6,7,8-tetrahydrofolate + NAD(+). The enzyme catalyses uridine(54) in tRNA + (6R)-5,10-methylene-5,6,7,8-tetrahydrofolate + NADPH + H(+) = 5-methyluridine(54) in tRNA + (6S)-5,6,7,8-tetrahydrofolate + NADP(+). In terms of biological role, catalyzes the folate-dependent formation of 5-methyl-uridine at position 54 (M-5-U54) in all tRNAs. In Caldicellulosiruptor bescii (strain ATCC BAA-1888 / DSM 6725 / KCTC 15123 / Z-1320) (Anaerocellum thermophilum), this protein is Methylenetetrahydrofolate--tRNA-(uracil-5-)-methyltransferase TrmFO.